A 372-amino-acid chain; its full sequence is M protein, serotype 2.2 (372 aa).

The signal sequence occupies residues 1–41 (MARQQTKKNYSLRKLKTGTASVAVALTVLGAGFANQTEVRA). 3 C repeats span residues 124–158 (AKTT…EAKH), 166–200 (KKLT…EAKY), and 215–249 (QKLE…TSEL). Composition is skewed to basic and acidic residues over residues 125 to 169 (KTTK…KKLT), 226 to 246 (TSRK…KKVT), and 260 to 274 (EESK…AELQ). 2 disordered regions span residues 125–191 (KTTK…ASRA) and 211–274 (EAKH…AELQ). D repeat units lie at residues 275-280 (AKLDAQ), 281-286 (GKALKE), 289-294 (AKQTEE), and 296-301 (AKLRAE). A compositionally biased stretch (basic and acidic residues) spans 295–304 (LAKLRAEKAA). The interval 295 to 344 (LAKLRAEKAAGSKTPATKPANKERSGRAAQTATRPSQNKGMRSQLPSTGE) is disordered. The span at 322–341 (AAQTATRPSQNKGMRSQLPS) shows a compositional bias: polar residues. The LPXTG sorting signal motif lies at 339 to 343 (LPSTG). At Thr342 the chain carries Pentaglycyl murein peptidoglycan amidated threonine. Residues 343–372 (GEAANPFFTAAAATVMVSAGMLALKRKEEN) constitute a propeptide, removed by sortase.

This sequence belongs to the M protein family.

It is found in the secreted. It localises to the cell wall. Functionally, this protein is one of the different antigenic serotypes of protein M. Protein M is closely associated with virulence of the bacterium and can render the organism resistant to phagocytosis. This Streptococcus pyogenes protein is M protein, serotype 2.2 (emmL2.2).